Consider the following 173-residue polypeptide: MAIILGVDPGSRITGYGVIQCQGRHQIYLGSGCIRTSSEELPGRLKQIFDGITEIIRQYQPDEFAIERVFMAKNADSALKLGQARGAAIVAATVANLPVAEYSATQIKSAVVGTGRAQKAQVQHMIQQLLKLPAAPQADAADALGVAVCHYHTSQSLIALSGRATARTYGRYR.

Active-site residues include Asp8, Glu67, and Asp139. The Mg(2+) site is built by Asp8, Glu67, and Asp139.

It belongs to the RuvC family. In terms of assembly, homodimer which binds Holliday junction (HJ) DNA. The HJ becomes 2-fold symmetrical on binding to RuvC with unstacked arms; it has a different conformation from HJ DNA in complex with RuvA. In the full resolvosome a probable DNA-RuvA(4)-RuvB(12)-RuvC(2) complex forms which resolves the HJ. Requires Mg(2+) as cofactor.

Its subcellular location is the cytoplasm. It catalyses the reaction Endonucleolytic cleavage at a junction such as a reciprocal single-stranded crossover between two homologous DNA duplexes (Holliday junction).. Its function is as follows. The RuvA-RuvB-RuvC complex processes Holliday junction (HJ) DNA during genetic recombination and DNA repair. Endonuclease that resolves HJ intermediates. Cleaves cruciform DNA by making single-stranded nicks across the HJ at symmetrical positions within the homologous arms, yielding a 5'-phosphate and a 3'-hydroxyl group; requires a central core of homology in the junction. The consensus cleavage sequence is 5'-(A/T)TT(C/G)-3'. Cleavage occurs on the 3'-side of the TT dinucleotide at the point of strand exchange. HJ branch migration catalyzed by RuvA-RuvB allows RuvC to scan DNA until it finds its consensus sequence, where it cleaves and resolves the cruciform DNA. In Shewanella baltica (strain OS223), this protein is Crossover junction endodeoxyribonuclease RuvC.